The chain runs to 1128 residues: Cordon-bleu protein-like 1 (1128 aa).

Residues 1–35 (MDGRTPRPQDAPARRKPKAKAPLPPAETKYTDVSS) are disordered. Thr139 carries the phosphothreonine modification. Phosphoserine is present on residues Ser204, Ser222, and Ser256. 3 disordered regions span residues 249-309 (KKRD…VPQD), 325-441 (MSVD…SPKS), and 454-499 (TLKN…TSNG). Thr260 carries the phosphothreonine modification. Polar residues predominate over residues 270–286 (FTRSNTISKPYISNTLP). The residue at position 273 (Ser273) is a Phosphoserine. Residue Thr284 is modified to Phosphothreonine. The KKRRAP 1 motif lies at 291 to 296 (KKRRAP). A phosphoserine mark is found at Ser326, Ser333, Ser344, and Ser356. Residues 345–357 (LQLSSMSAGNSSL) are compositionally biased toward polar residues. A KKRRAP 2 motif is present at residues 360 to 365 (TKRKAP). Positions 397–415 (SEANSPEELSSPAGISSDY) are enriched in polar residues. Over residues 416 to 425 (SLEEIDEKEE) the composition is skewed to acidic residues. Phosphoserine is present on residues Ser438, Ser441, Ser461, Ser471, and Ser474. Basic and acidic residues predominate over residues 475-488 (MEEKQETKSTDGQE). 6 positions are modified to phosphoserine: Ser563, Ser584, Ser786, Ser813, Ser814, and Ser821. Disordered stretches follow at residues 780-840 (TEDS…PFAP), 882-964 (SAAA…SQVS), 995-1081 (RSQS…PEQM), and 1103-1128 (IPSN…QDGH). The segment covering 899-908 (LTNKEAERDM) has biased composition (basic and acidic residues). Residues Ser911, Ser917, Ser947, Ser1069, and Ser1070 each carry the phosphoserine modification. Polar residues-rich tracts occupy residues 1045–1081 (SAHN…PEQM) and 1103–1122 (IPSN…SMSP). Positions 1081–1101 (MRQSLLTAIRSGEAAAKLKRV) constitute a WH2 domain. Residue Ser1121 is modified to Phosphoserine.

In Homo sapiens (Human), this protein is Cordon-bleu protein-like 1.